A 344-amino-acid polypeptide reads, in one-letter code: Acireductone dioxygenase (344 aa).

Positions 92, 94, 98, and 137 each coordinate Fe(2+). Residues H92, H94, E98, and H137 each contribute to the Ni(2+) site.

This sequence belongs to the acireductone dioxygenase (ARD) family. Fe(2+) serves as cofactor. Ni(2+) is required as a cofactor.

The protein resides in the cytoplasm. It is found in the nucleus. The enzyme catalyses 1,2-dihydroxy-5-(methylsulfanyl)pent-1-en-3-one + O2 = 4-methylsulfanyl-2-oxobutanoate + formate + 2 H(+). It carries out the reaction 1,2-dihydroxy-5-(methylsulfanyl)pent-1-en-3-one + O2 = 3-(methylsulfanyl)propanoate + CO + formate + 2 H(+). Its pathway is amino-acid biosynthesis; L-methionine biosynthesis via salvage pathway; L-methionine from S-methyl-5-thio-alpha-D-ribose 1-phosphate: step 5/6. In terms of biological role, catalyzes 2 different reactions between oxygen and the acireductone 1,2-dihydroxy-3-keto-5-methylthiopentene (DHK-MTPene) depending upon the metal bound in the active site. Fe-containing acireductone dioxygenase (Fe-ARD) produces formate and 2-keto-4-methylthiobutyrate (KMTB), the alpha-ketoacid precursor of methionine in the methionine recycle pathway. Ni-containing acireductone dioxygenase (Ni-ARD) produces methylthiopropionate, carbon monoxide and formate, and does not lie on the methionine recycle pathway. In Leishmania major, this protein is Acireductone dioxygenase.